Here is a 132-residue protein sequence, read N- to C-terminus: Small ribosomal subunit protein uS8 (132 aa).

The protein belongs to the universal ribosomal protein uS8 family. In terms of assembly, part of the 30S ribosomal subunit. Contacts proteins S5 and S12.

In terms of biological role, one of the primary rRNA binding proteins, it binds directly to 16S rRNA central domain where it helps coordinate assembly of the platform of the 30S subunit. The polypeptide is Small ribosomal subunit protein uS8 (Mycobacterium marinum (strain ATCC BAA-535 / M)).